Reading from the N-terminus, the 456-residue chain is Phospholipase A1 member A (456 aa).

Positions Met1–Gly25 are cleaved as a signal peptide. Catalysis depends on Ser166, which acts as the Nucleophile. Catalysis depends on Asp190, which acts as the Charge relay system. A disulfide bond links Cys245 and Cys258. The active-site Charge relay system is His260. 2 cysteine pairs are disulfide-bonded: Cys282–Cys293 and Cys296–Cys304. Asn365 carries an N-linked (GlcNAc...) asparagine glycan.

It belongs to the AB hydrolase superfamily. Lipase family.

It is found in the secreted. It catalyses the reaction a 1,2-diacyl-sn-glycero-3-phospho-L-serine + H2O = a 2-acyl-sn-glycero-3-phospho-L-serine + a fatty acid + H(+). It carries out the reaction 1,2-di-(9Z)-octadecenoyl-sn-glycero-3-phospho-L-serine + H2O = 2-(9Z-octadecenoyl)-sn-glycero-3-phospho-L-serine + (9Z)-octadecenoate + H(+). The catalysed reaction is 1-hexadecanoyl-2-(5Z,8Z,11Z,14Z-eicosatetraenoyl)-sn-glycero-3-phospho-L-serine + H2O = 2-(5Z,8Z,11Z,14Z)-eicosatetraenoyl-sn-glycero-3-phospho-L-serine + hexadecanoate + H(+). The enzyme catalyses a 1-acyl-sn-glycero-3-phospho-L-serine + H2O = sn-glycero-3-phospho-L-serine + a fatty acid + H(+). It catalyses the reaction 1-(9Z-octadecenoyl)-sn-glycero-3-phospho-L-serine + H2O = sn-glycero-3-phospho-L-serine + (9Z)-octadecenoate + H(+). Its function is as follows. Hydrolyzes the ester bond of the acyl group attached at the sn-1 position of phosphatidylserines (phospholipase A1 activity) and 1-acyl-2-lysophosphatidylserines (lysophospholipase activity) in the pathway of phosphatidylserines acyl chain remodeling. Cleaves phosphatidylserines exposed on the outer leaflet of the plasma membrane of apoptotic cells producing 2-acyl-1-lysophosphatidylserines, which in turn enhance mast cell activation and histamine production. Has no activity toward other glycerophospholipids including phosphatidylcholines, phosphatidylethanolamines, phosphatidic acids or phosphatidylinositols, or glycerolipids such as triolein. In Pongo abelii (Sumatran orangutan), this protein is Phospholipase A1 member A (PLA1A).